A 548-amino-acid polypeptide reads, in one-letter code: Sesquiterpene synthase 12 (548 aa).

D299, D303, D444, and E452 together coordinate Mg(2+). The short motif at 299–303 (DDTFD) is the DDXXD motif element.

The protein belongs to the terpene synthase family. Tpsa subfamily. Mg(2+) serves as cofactor. Mn(2+) is required as a cofactor. As to expression, mostly expressed in leaves, to a lower extent in stems, trichomes, flowers and roots and, at low levels, in fruits.

The catalysed reaction is (2E,6E)-farnesyl diphosphate = alpha-humulene + diphosphate. It catalyses the reaction (2E,6E)-farnesyl diphosphate = (-)-(E)-beta-caryophyllene + diphosphate. The enzyme catalyses (2Z,6Z)-farnesyl diphosphate = beta-bisabolene + diphosphate. It carries out the reaction (2E)-geranyl diphosphate = terpinolene + diphosphate. The catalysed reaction is (2E)-geranyl diphosphate = limonene + diphosphate. It catalyses the reaction (2E)-geranyl diphosphate = beta-myrcene + diphosphate. The enzyme catalyses (2E)-geranyl diphosphate = (E)-beta-ocimene + diphosphate. It carries out the reaction (2Z,6Z)-farnesyl diphosphate = gamma-curcumene + diphosphate. The catalysed reaction is (2Z,6Z)-farnesyl diphosphate = (Z)-gamma-bisabolene + diphosphate. It functions in the pathway secondary metabolite biosynthesis; terpenoid biosynthesis. Its function is as follows. Sesquiterpene synthase involved in the biosynthesis of volatile compounds. Mediates the conversion of (2E,6E)-farnesyl diphosphate (FPP) into (1E,4E,8E)-alpha-humulene and (-)-(E)-beta-caryophyllene, and of (2Z,6Z)-farnesyl diphosphate ((ZZ)-FPP) into beta-bisabolene, gamma-curcumene and (Z)-gamma-bisabolene. Can act with a low efficiency as a monoterpene synthase with geranyl diphosphate (GPP) as substrate, thus producing beta-myrcene, (E)-beta-ocimene, limonene and terpinolene. The sequence is that of Sesquiterpene synthase 12 from Solanum lycopersicum (Tomato).